A 718-amino-acid polypeptide reads, in one-letter code: K(+)-insensitive pyrophosphate-energized proton pump (718 aa).

6 consecutive transmembrane segments (helical) span residues 6–26 (AVLV…IWAI), 61–81 (IAIV…LNAA), 83–103 (GFLI…HVSV), 112–132 (AASL…AITG), 133–153 (LLVA…LTVW), and 168–188 (VSLG…GGIF). Residue Lys-190 coordinates substrate. Mg(2+)-binding residues include Asp-193, Asp-197, Asn-220, and Asp-223. Helical transmembrane passes span 235–255 (LFET…IFFH), 265–285 (LYPL…TFFV), 300–320 (GLIA…TLTV), 335–355 (GTNL…IVVI), 385–405 (GLAV…GGII), and 413–433 (LFGT…IVAL). A Mg(2+)-binding site is contributed by Asp-441. The next 4 membrane-spanning stretches (helical) occupy residues 472–492 (AVTK…LFAA), 524–544 (YVVA…GMAM), 593–613 (IIPS…VLLI), and 620–640 (AFAA…FVAI). Ca(2+) contacts are provided by Asp-650, Asp-682, and Asp-686. Lys-689 contacts substrate. A helical transmembrane segment spans residues 695–715 (AVNPAIKITNIVALLLLAVLA).

The protein belongs to the H(+)-translocating pyrophosphatase (TC 3.A.10) family. K(+)-insensitive subfamily. In terms of assembly, homodimer. The cofactor is Mg(2+).

Its subcellular location is the cell inner membrane. It carries out the reaction diphosphate + H2O + H(+)(in) = 2 phosphate + 2 H(+)(out). Its function is as follows. Proton pump that utilizes the energy of pyrophosphate hydrolysis as the driving force for proton movement across the membrane. Generates a proton motive force. The chain is K(+)-insensitive pyrophosphate-energized proton pump from Brucella melitensis biotype 1 (strain ATCC 23456 / CCUG 17765 / NCTC 10094 / 16M).